A 364-amino-acid polypeptide reads, in one-letter code: Probable dual-specificity RNA methyltransferase RlmN (364 aa).

Glu107 (proton acceptor) is an active-site residue. A Radical SAM core domain is found at 113–346 (HEYGNSVCVT…ATIRREQGSD (234 aa)). The cysteines at positions 120 and 351 are disulfide-linked. Residues Cys127, Cys131, and Cys134 each contribute to the [4Fe-4S] cluster site. Residues 177–178 (GE), Ser209, 232–234 (SLH), and Asn308 each bind S-adenosyl-L-methionine. Cys351 (S-methylcysteine intermediate) is an active-site residue.

The protein belongs to the radical SAM superfamily. RlmN family. Requires [4Fe-4S] cluster as cofactor.

The protein localises to the cytoplasm. The enzyme catalyses adenosine(2503) in 23S rRNA + 2 reduced [2Fe-2S]-[ferredoxin] + 2 S-adenosyl-L-methionine = 2-methyladenosine(2503) in 23S rRNA + 5'-deoxyadenosine + L-methionine + 2 oxidized [2Fe-2S]-[ferredoxin] + S-adenosyl-L-homocysteine. The catalysed reaction is adenosine(37) in tRNA + 2 reduced [2Fe-2S]-[ferredoxin] + 2 S-adenosyl-L-methionine = 2-methyladenosine(37) in tRNA + 5'-deoxyadenosine + L-methionine + 2 oxidized [2Fe-2S]-[ferredoxin] + S-adenosyl-L-homocysteine. Its function is as follows. Specifically methylates position 2 of adenine 2503 in 23S rRNA and position 2 of adenine 37 in tRNAs. Confers resistance to some classes of antibiotics. This chain is Probable dual-specificity RNA methyltransferase RlmN, found in Staphylococcus epidermidis (strain ATCC 35984 / DSM 28319 / BCRC 17069 / CCUG 31568 / BM 3577 / RP62A).